The primary structure comprises 234 residues: Ubiquinone biosynthesis O-methyltransferase (234 aa).

Positions 39, 59, 80, and 124 each coordinate S-adenosyl-L-methionine.

The protein belongs to the methyltransferase superfamily. UbiG/COQ3 family.

The catalysed reaction is a 3-demethylubiquinol + S-adenosyl-L-methionine = a ubiquinol + S-adenosyl-L-homocysteine + H(+). It catalyses the reaction a 3-(all-trans-polyprenyl)benzene-1,2-diol + S-adenosyl-L-methionine = a 2-methoxy-6-(all-trans-polyprenyl)phenol + S-adenosyl-L-homocysteine + H(+). Its pathway is cofactor biosynthesis; ubiquinone biosynthesis. In terms of biological role, O-methyltransferase that catalyzes the 2 O-methylation steps in the ubiquinone biosynthetic pathway. This Aliivibrio fischeri (strain MJ11) (Vibrio fischeri) protein is Ubiquinone biosynthesis O-methyltransferase.